Consider the following 949-residue polypeptide: Syndetin (949 aa).

Positions 1–28 (MQKIKSLMTRQGLRSPQESVHDLSPIEN) are disordered. Polar residues predominate over residues 8 to 18 (MTRQGLRSPQE). Coiled coils occupy residues 82–104 (SLQELEEYRDKLKQQQAAELERV) and 198–226 (YSCISELNSKLQDTLEQIEEQLDVALSKI). The interval 509–581 (FEIQADSKDD…ETLRSRKKSD (73 aa)) is disordered. A compositionally biased stretch (basic and acidic residues) spans 569 to 581 (VSRETLRSRKKSD).

This sequence belongs to the syndetin family. Component of the endosome-associated retrograde protein (EARP) complex.

Its subcellular location is the recycling endosome. The protein localises to the membrane. Acts as a component of the EARP complex that is involved in endocytic recycling. The EARP complex associates with Rab4-positive endosomes and promotes recycling of internalized transferrin receptor (TFRC) to the plasma membrane. The protein is Syndetin of Gallus gallus (Chicken).